The sequence spans 218 residues: Eukaryotic translation initiation factor 3 subunit K (218 aa).

At alanine 2 the chain carries N-acetylalanine. Threonine 28 bears the Phosphothreonine mark. Residues 42–204 (YDLEANLAVL…SIKPKNIVEK (163 aa)) form the PCI domain. Serine 217 carries the post-translational modification Phosphoserine.

Belongs to the eIF-3 subunit K family. In terms of assembly, component of the eukaryotic translation initiation factor 3 (eIF-3) complex, which is composed of 13 subunits: EIF3A, EIF3B, EIF3C, EIF3D, EIF3E, EIF3F, EIF3G, EIF3H, EIF3I, EIF3J, EIF3K, EIF3L and EIF3M. The eIF-3 complex appears to include 3 stable modules: module A is composed of EIF3A, EIF3B, EIF3G and EIF3I; module B is composed of EIF3F, EIF3H, and EIF3M; and module C is composed of EIF3C, EIF3D, EIF3E, EIF3K and EIF3L. EIF3C of module C binds EIF3B of module A and EIF3H of module B, thereby linking the three modules. EIF3J is a labile subunit that binds to the eIF-3 complex via EIF3B. The eIF-3 complex interacts with RPS6KB1 under conditions of nutrient depletion. Mitogenic stimulation leads to binding and activation of a complex composed of MTOR and RPTOR, leading to phosphorylation and release of RPS6KB1 and binding of EIF4B to eIF-3. Interacts with CCND3, but not with CCND1 and CCND2.

Its subcellular location is the nucleus. The protein localises to the cytoplasm. Its function is as follows. Component of the eukaryotic translation initiation factor 3 (eIF-3) complex, which is required for several steps in the initiation of protein synthesis. The eIF-3 complex associates with the 40S ribosome and facilitates the recruitment of eIF-1, eIF-1A, eIF-2:GTP:methionyl-tRNAi and eIF-5 to form the 43S pre-initiation complex (43S PIC). The eIF-3 complex stimulates mRNA recruitment to the 43S PIC and scanning of the mRNA for AUG recognition. The eIF-3 complex is also required for disassembly and recycling of post-termination ribosomal complexes and subsequently prevents premature joining of the 40S and 60S ribosomal subunits prior to initiation. The eIF-3 complex specifically targets and initiates translation of a subset of mRNAs involved in cell proliferation, including cell cycling, differentiation and apoptosis, and uses different modes of RNA stem-loop binding to exert either translational activation or repression. The chain is Eukaryotic translation initiation factor 3 subunit K from Bos taurus (Bovine).